We begin with the raw amino-acid sequence, 134 residues long: Phosphoribosyl-AMP cyclohydrolase (134 aa).

Mg(2+) is bound at residue aspartate 93. A Zn(2+)-binding site is contributed by cysteine 94. Aspartate 95 and aspartate 97 together coordinate Mg(2+). Zn(2+)-binding residues include cysteine 112 and cysteine 119.

Belongs to the PRA-CH family. As to quaternary structure, homodimer. Mg(2+) is required as a cofactor. The cofactor is Zn(2+).

It localises to the cytoplasm. It carries out the reaction 1-(5-phospho-beta-D-ribosyl)-5'-AMP + H2O = 1-(5-phospho-beta-D-ribosyl)-5-[(5-phospho-beta-D-ribosylamino)methylideneamino]imidazole-4-carboxamide. It functions in the pathway amino-acid biosynthesis; L-histidine biosynthesis; L-histidine from 5-phospho-alpha-D-ribose 1-diphosphate: step 3/9. Functionally, catalyzes the hydrolysis of the adenine ring of phosphoribosyl-AMP. The polypeptide is Phosphoribosyl-AMP cyclohydrolase (Caulobacter sp. (strain K31)).